The sequence spans 69 residues: MMATGTVKWFNATKGFGFIQPDDGSADVFVHISAVERAGLRELKDGQKISYELVKDRKSGKMSADNLQA.

Residues 5 to 65 (GTVKWFNATK…DRKSGKMSAD (61 aa)) enclose the CSD domain.

It is found in the cytoplasm. This Sinorhizobium fredii (strain NBRC 101917 / NGR234) protein is Probable cold shock protein y4cH.